Reading from the N-terminus, the 364-residue chain is Paraneoplastic antigen Ma2 homolog (364 aa).

Ala2 is modified (N-acetylalanine). A compositionally biased stretch (acidic residues) spans 335-351 (EEEEATFENENTEEPEG). The disordered stretch occupies residues 335–364 (EEEEATFENENTEEPEGGDGYGHWGNEAND).

Belongs to the PNMA family.

The protein localises to the nucleus. It is found in the nucleolus. This Bos taurus (Bovine) protein is Paraneoplastic antigen Ma2 homolog (PNMA2).